We begin with the raw amino-acid sequence, 982 residues long: Capsid protein (982 aa).

2 disordered regions span residues 592–613 (VFRS…RWLT) and 628–655 (EPPA…HEEE). The segment covering 597–613 (PRRESTTTTDDSPRWLT) has biased composition (basic and acidic residues). Over residues 635 to 649 (GRSSSPVTSSISEGT) the composition is skewed to polar residues.

As to quaternary structure, homomultimer.

The protein resides in the virion. Functionally, capsid protein self-assembles to form an icosahedral capsid with a T=1 symmetry, about 35-40 nm in diameter. The sequence is that of Capsid protein (p2) from Penicillium chrysogenum virus (isolate Caston/2003) (PcV).